A 664-amino-acid chain; its full sequence is RBBP8 N-terminal-like protein (664 aa).

A compositionally biased stretch (basic and acidic residues) spans 125 to 140 (LRGLGDRPKPRAKEGT). 2 disordered regions span residues 125 to 284 (LRGL…KLSP) and 369 to 664 (RAGS…WEET). A compositionally biased stretch (pro residues) spans 241 to 255 (GTPPPLPARSSPPSP). A compositionally biased stretch (basic and acidic residues) spans 437-454 (ALDKPLDLSEWGRARGQD). Positions 481-496 (SGPLTRSPQALSNGTK) are enriched in polar residues. Over residues 516–528 (LPGSQLSLSSPGS) the composition is skewed to low complexity. The span at 537–552 (PLPPPHPQPPPHPQPP) shows a compositional bias: pro residues. Over residues 554–570 (LDGHPEPSKAEVLRPES) the composition is skewed to basic and acidic residues. Over residues 584-597 (GLSSQAEATTSTTG) the composition is skewed to polar residues. Residues 628 to 637 (KKPSRGRRKL) show a composition bias toward basic residues. Positions 654 to 664 (PSPNSSPWEET) are enriched in polar residues.

In Homo sapiens (Human), this protein is RBBP8 N-terminal-like protein (RBBP8NL).